A 339-amino-acid polypeptide reads, in one-letter code: MNYIKFDEKKPLDVIPIGRVTIDFNPNEINRPLEESRTFTKYLGGSPGNIAVGLARLGKKVGFLSTVSDDQFGNFVVNYLKNEGIDISQINRAKNGEKLGLTFTEILSPKESSILMYRKGIADLQLSSKEVSEDYIKSAKAIVISGTALSKSPSREAAFVALEYAKKHNTRIIFDLDYREYTWNCKEEIAIYYSLAARMSDVIMGSREEFNLMEGLISPEESNDKETAERWIGYGNKIVVIKHGKDGSTAYLHDGTSYKIKPFPVKLLKSFGGGDAYASAFIYGIMEGWDVIDALEFGSASAAMLVASHSCSEAMPKVEEIKQFIKEKKEEHGEMVVRG.

The protein belongs to the carbohydrate kinase PfkB family.

It catalyses the reaction 5-dehydro-2-deoxy-D-gluconate + ATP = 6-phospho-5-dehydro-2-deoxy-D-gluconate + ADP + H(+). The protein operates within polyol metabolism; myo-inositol degradation into acetyl-CoA; acetyl-CoA from myo-inositol: step 5/7. Functionally, catalyzes the phosphorylation of 5-dehydro-2-deoxy-D-gluconate (2-deoxy-5-keto-D-gluconate or DKG) to 6-phospho-5-dehydro-2-deoxy-D-gluconate (DKGP). This chain is 5-dehydro-2-deoxygluconokinase, found in Clostridium tetani (strain Massachusetts / E88).